The sequence spans 46 residues: Esculentin-1R (46 aa).

A disulfide bond links cysteine 40 and cysteine 46.

Expressed by the skin glands.

Its subcellular location is the secreted. Its function is as follows. Shows antibacterial activity against representative Gram-negative and Gram-positive bacterial species, and hemolytic activity. The chain is Esculentin-1R from Pelophylax ridibundus (Marsh frog).